The chain runs to 287 residues: uncharacterized protein (287 aa).

The protein belongs to the AllH family.

This is an uncharacterized protein from Escherichia coli (strain K12).